We begin with the raw amino-acid sequence, 104 residues long: Large ribosomal subunit protein bL21 (104 aa).

Belongs to the bacterial ribosomal protein bL21 family. In terms of assembly, part of the 50S ribosomal subunit. Contacts protein L20.

Its function is as follows. This protein binds to 23S rRNA in the presence of protein L20. This chain is Large ribosomal subunit protein bL21, found in Streptococcus agalactiae serotype Ia (strain ATCC 27591 / A909 / CDC SS700).